The following is a 168-amino-acid chain: 3-hydroxyacyl-[acyl-carrier-protein] dehydratase FabZ (168 aa).

Residue H54 is part of the active site.

This sequence belongs to the thioester dehydratase family. FabZ subfamily.

The protein resides in the cytoplasm. The enzyme catalyses a (3R)-hydroxyacyl-[ACP] = a (2E)-enoyl-[ACP] + H2O. In terms of biological role, involved in unsaturated fatty acids biosynthesis. Catalyzes the dehydration of short chain beta-hydroxyacyl-ACPs and long chain saturated and unsaturated beta-hydroxyacyl-ACPs. The protein is 3-hydroxyacyl-[acyl-carrier-protein] dehydratase FabZ of Yersinia enterocolitica serotype O:8 / biotype 1B (strain NCTC 13174 / 8081).